Reading from the N-terminus, the 436-residue chain is Histidinol dehydrogenase (436 aa).

Residues Ser-237, Gln-259, and His-262 each contribute to the substrate site. Zn(2+) contacts are provided by Gln-259 and His-262. Active-site proton acceptor residues include Glu-327 and His-328. His-328, Asp-361, Glu-415, and His-420 together coordinate substrate. Residue Asp-361 participates in Zn(2+) binding. Position 420 (His-420) interacts with Zn(2+).

Belongs to the histidinol dehydrogenase family. The cofactor is Zn(2+).

The enzyme catalyses L-histidinol + 2 NAD(+) + H2O = L-histidine + 2 NADH + 3 H(+). It participates in amino-acid biosynthesis; L-histidine biosynthesis; L-histidine from 5-phospho-alpha-D-ribose 1-diphosphate: step 9/9. Catalyzes the sequential NAD-dependent oxidations of L-histidinol to L-histidinaldehyde and then to L-histidine. The sequence is that of Histidinol dehydrogenase from Helicobacter hepaticus (strain ATCC 51449 / 3B1).